A 513-amino-acid chain; its full sequence is 2-isopropylmalate synthase (513 aa).

Residues 7–269 (VYIFDTTLRD…TTGIVTEELF (263 aa)) form the Pyruvate carboxyltransferase domain. Mn(2+)-binding residues include Asp-16, His-204, His-206, and Asn-240. A regulatory domain region spans residues 393–513 (ALQFLSVHCG…KEEERTCPQL (121 aa)).

This sequence belongs to the alpha-IPM synthase/homocitrate synthase family. LeuA type 1 subfamily. Homodimer. Mn(2+) serves as cofactor.

Its subcellular location is the cytoplasm. It catalyses the reaction 3-methyl-2-oxobutanoate + acetyl-CoA + H2O = (2S)-2-isopropylmalate + CoA + H(+). The protein operates within amino-acid biosynthesis; L-leucine biosynthesis; L-leucine from 3-methyl-2-oxobutanoate: step 1/4. In terms of biological role, catalyzes the condensation of the acetyl group of acetyl-CoA with 3-methyl-2-oxobutanoate (2-ketoisovalerate) to form 3-carboxy-3-hydroxy-4-methylpentanoate (2-isopropylmalate). This chain is 2-isopropylmalate synthase, found in Solidesulfovibrio magneticus (strain ATCC 700980 / DSM 13731 / RS-1) (Desulfovibrio magneticus).